A 325-amino-acid polypeptide reads, in one-letter code: Tagatose 1,6-diphosphate aldolase 1 (325 aa).

It belongs to the aldolase LacD family.

It carries out the reaction D-tagatofuranose 1,6-bisphosphate = D-glyceraldehyde 3-phosphate + dihydroxyacetone phosphate. Its pathway is carbohydrate metabolism; D-tagatose 6-phosphate degradation; D-glyceraldehyde 3-phosphate and glycerone phosphate from D-tagatose 6-phosphate: step 2/2. The polypeptide is Tagatose 1,6-diphosphate aldolase 1 (Streptococcus agalactiae serotype III (strain NEM316)).